Here is a 1046-residue protein sequence, read N- to C-terminus: Protein HBT1 (1046 aa).

Disordered regions lie at residues 1–455 (MNMN…AAEK), 469–894 (DYQQ…LGGA), and 908–1046 (PSLI…RSEI). Residue Ser41 is modified to Phosphoserine. Positions 81–96 (KDSETPHEDTEADANR) are enriched in basic and acidic residues. Polar residues-rich tracts occupy residues 98–149 (ANVT…SPPT), 175–191 (IATT…TSPV), and 228–301 (ANTG…NTDS). A Phosphoserine modification is found at Ser303. Residues 327–341 (VYTSTGPKSNVSSGM) are compositionally biased toward polar residues. Residue Ser363 is modified to Phosphoserine. Composition is skewed to polar residues over residues 389 to 408 (QTGL…QQTM) and 420 to 429 (GFVSQQPSYH). A compositionally biased stretch (basic and acidic residues) spans 430 to 455 (DSNKNIQHPEKNKVDNKNISERAAEK). Positions 488 to 498 (YSSSAGKNKNL) are enriched in polar residues. A Phosphoserine modification is found at Ser491. The segment covering 529 to 538 (GHMKYNDNGR) has biased composition (basic and acidic residues). Over residues 548–559 (QAGSQNTNNNID) the composition is skewed to polar residues. Ser561 bears the Phosphoserine mark. A compositionally biased stretch (polar residues) spans 570-582 (GLSNDATTRNNVV). The span at 586-597 (MKDEDMNEDSTK) shows a compositional bias: basic and acidic residues. Over residues 605 to 619 (YLDDVEDYHENDIDD) the composition is skewed to acidic residues. The segment covering 621–630 (SNAKKNDLYS) has biased composition (basic and acidic residues). A Phosphoserine modification is found at Ser671. The segment covering 742–756 (FTNNPETGTTGNVDT) has biased composition (polar residues). Over residues 773 to 782 (DDSKNTDTHL) the composition is skewed to basic and acidic residues. Composition is skewed to polar residues over residues 792 to 802 (NSRSGDTTYSK) and 837 to 855 (SSEQ…NQEY). Tyr855 carries the post-translational modification Phosphotyrosine. Phosphoserine is present on Ser857. Positions 868 to 890 (KVLEEDAPGYKREVDLKNKRRTD) are enriched in basic and acidic residues. The segment covering 922–951 (DTNTSSSQKPSEGTYPETTSYSIHNETTSQ) has biased composition (polar residues). Residues 952–963 (GRKVSVGSMGSG) are compositionally biased toward low complexity. Positions 964–976 (KSKHHHNHHRHSR) are enriched in basic residues. Ser1005 carries the post-translational modification Phosphoserine. Acidic residues predominate over residues 1006 to 1019 (DEGEQDYHDDEQGE). The residue at position 1034 (Ser1034) is a Phosphoserine.

In terms of assembly, conjugated with HUB1. HUB1 has not the classical C-terminal Gly residue, so it is still unknown how conjugation may occur.

It is found in the cytoplasm. In terms of biological role, polarity-determining protein which forms a conjugate with the ubiquitin-like modifier HUB1. Involved in bud site selection and cellular morphogenesis during conjugation. Required for survival during stationary phase. This is Protein HBT1 (HBT1) from Saccharomyces cerevisiae (strain ATCC 204508 / S288c) (Baker's yeast).